We begin with the raw amino-acid sequence, 552 residues long: Membrane protein insertase YidC (552 aa).

Residues 6-26 (NLLLAAIAAVILMLFIRWNHF) form a helical membrane-spanning segment. 2 stretches are compositionally biased toward polar residues: residues 32-41 (QHQAGNTPAG) and 60-70 (PTASDTPQATA). Residues 32–70 (QHQAGNTPAGSSIAAIAPDSNGDIPSAVPTASDTPQATA) are disordered. Transmembrane regions (helical) follow at residues 365–387 (WGLAIIGLTLSVKLLFFPLSAAS), 431–451 (FGGCLPLLIQMPVFIALYWVL), 472–492 (MDPYFVLPIIYGATMWIMQKL), and 508–528 (LPFVFTFMFLWFPAGLVLYWV).

Belongs to the OXA1/ALB3/YidC family. Type 1 subfamily. In terms of assembly, interacts with the Sec translocase complex via SecD. Specifically interacts with transmembrane segments of nascent integral membrane proteins during membrane integration.

Its subcellular location is the cell inner membrane. In terms of biological role, required for the insertion and/or proper folding and/or complex formation of integral membrane proteins into the membrane. Involved in integration of membrane proteins that insert both dependently and independently of the Sec translocase complex, as well as at least some lipoproteins. Aids folding of multispanning membrane proteins. The sequence is that of Membrane protein insertase YidC from Cellvibrio japonicus (strain Ueda107) (Pseudomonas fluorescens subsp. cellulosa).